The chain runs to 527 residues: MNKKGFLDSSSTKILQDLAVAPIDLTAPGVISKERIERFSLSVEGFTLSYATERVDEGILSALEDLASERGLIESMQAMQNGEVVNYIENFPSESRPALHTATRAWVKESPLQGNAEDISLRSKIEAQRLKDFLNRYRDVFTTIVQIGIGGSELGPKALHWALKGCCPSDKKVYFVSNVDPDNAAEVLQEIDCAKTLVVTVSKSGTTLETAVNEELLADHFLKQGLHFQDHFIAVTCEGSPMDDTSKYLEVFHIWDSIGGRYSSTSMVGGVVLGFAYGFDVFLQLLEGAASMDLAALEPRMSENLPLLSAMLGIWNRNFLRYPTSAVVPYATGLEYFPAHLQQCGMESNGKSVAQTGEVIGFATSPILWGEVGTNSQHSFFQCLHQGSDIVPIEFIGFQENQRGKDIVIAGSSSSQKLFANMVAQSIALAKGRENTNPNKNFRGNRPSSLLVSERLTPYTMGALLAFYEHKIVFQGFCWGINSFDQEGVTLGKDLANQVLQVMQGQEKEGALLEAEALLRLFNNIKK.

The active-site Proton donor is the E347. Residues H378 and K493 contribute to the active site.

Belongs to the GPI family.

Its subcellular location is the cytoplasm. The enzyme catalyses alpha-D-glucose 6-phosphate = beta-D-fructose 6-phosphate. The protein operates within carbohydrate biosynthesis; gluconeogenesis. It functions in the pathway carbohydrate degradation; glycolysis; D-glyceraldehyde 3-phosphate and glycerone phosphate from D-glucose: step 2/4. Catalyzes the reversible isomerization of glucose-6-phosphate to fructose-6-phosphate. The chain is Glucose-6-phosphate isomerase from Chlamydia caviae (strain ATCC VR-813 / DSM 19441 / 03DC25 / GPIC) (Chlamydophila caviae).